The primary structure comprises 135 residues: HVA22-like protein d (135 aa).

Transmembrane regions (helical) follow at residues 11 to 31 (LHSGAGPIVMLLYPLYASVIA), 42 to 62 (QWLAYWIIYSFLSLTELILQS), and 63 to 83 (LIEWIPIWYTVKLVFVAWLVL).

It belongs to the DP1 family. As to expression, predominantly expressed in flower buds.

It localises to the membrane. The chain is HVA22-like protein d (HVA22D) from Arabidopsis thaliana (Mouse-ear cress).